Consider the following 320-residue polypeptide: Olfactory receptor 2W1 (320 aa).

Topologically, residues 1–25 are extracellular; the sequence is MDQSNYSSLHGFILLGFSNHPKMEM. Residue Asn-5 is glycosylated (N-linked (GlcNAc...) asparagine). A helical transmembrane segment spans residues 26–49; it reads ILSGVVAIFYLITLVGNTAIILAS. Over 50–57 the chain is Cytoplasmic; that stretch reads LLDSQLHT. Residues 58–79 form a helical membrane-spanning segment; the sequence is PMYFFLRNLSFLDLCFTTSIIP. At 80-100 the chain is on the extracellular side; it reads QMLVNLWGPDKTISYVGCIIQ. An intrachain disulfide couples Cys-97 to Cys-189. The helical transmembrane segment at 101–120 threads the bilayer; that stretch reads LYVYMWLGSVECLLLAVMSY. The Cytoplasmic portion of the chain corresponds to 121–139; the sequence is DRFTAICKPLHYFVVMNPH. A helical transmembrane segment spans residues 140-158; sequence LCLKMIIMIWSISLANSVV. Residues 159 to 195 are Extracellular-facing; that stretch reads LCTLTLNLPTCGNNILDHFLCELPALVKIACVDTTTV. A helical transmembrane segment spans residues 196-219; the sequence is EMSVFALGIIIVLTPLILILISYG. Residues 220–236 lie on the Cytoplasmic side of the membrane; the sequence is YIAKAVLRTKSKASQRK. The chain crosses the membrane as a helical span at residues 237–259; sequence AMNTCGSHLTVVSMFYGTIIYMY. Residues 260 to 272 are Extracellular-facing; it reads LQPGNRASKDQGK. Residues 273-292 form a helical membrane-spanning segment; it reads FLTLFYTVITPSLNPLIYTL. At 293–320 the chain is on the cytoplasmic side; that stretch reads RNKDMKDALKKLMRFHHKSTKIKRNCKS.

The protein belongs to the G-protein coupled receptor 1 family.

It is found in the cell membrane. In terms of biological role, odorant receptor. The chain is Olfactory receptor 2W1 (OR2W1) from Homo sapiens (Human).